Consider the following 179-residue polypeptide: Large ribosomal subunit protein uL6 (179 aa).

Residues 151–179 are disordered; the sequence is RKPEPYKGKGIKYDNEQIRRKAGKSGGKK. Positions 152 to 169 are enriched in basic and acidic residues; sequence KPEPYKGKGIKYDNEQIR. A compositionally biased stretch (basic residues) spans 170–179; the sequence is RKAGKSGGKK.

This sequence belongs to the universal ribosomal protein uL6 family. As to quaternary structure, part of the 50S ribosomal subunit.

Functionally, this protein binds to the 23S rRNA, and is important in its secondary structure. It is located near the subunit interface in the base of the L7/L12 stalk, and near the tRNA binding site of the peptidyltransferase center. The protein is Large ribosomal subunit protein uL6 of Nitratidesulfovibrio vulgaris (strain ATCC 29579 / DSM 644 / CCUG 34227 / NCIMB 8303 / VKM B-1760 / Hildenborough) (Desulfovibrio vulgaris).